Reading from the N-terminus, the 237-residue chain is Undecaprenyl-diphosphatase (237 aa).

7 helical membrane-spanning segments follow: residues 38-58, 65-85, 92-112, 126-146, 166-186, 191-211, and 217-237; these read QTAVLHLGTLVSVVLFAFDGI, WRIILNLIVSTIPAGVFGVLF, LFSSPRFLPLFFSVTALILMF, MSFLDALLVGIAQLFALFPGI, ALQYSFLMSIPVVLGAGILGL, VTILAPIFAFLSGLFALYVLS, and GKIWQFSYYCLFVAILSYLVG.

It belongs to the UppP family.

It localises to the cell inner membrane. The enzyme catalyses di-trans,octa-cis-undecaprenyl diphosphate + H2O = di-trans,octa-cis-undecaprenyl phosphate + phosphate + H(+). Functionally, catalyzes the dephosphorylation of undecaprenyl diphosphate (UPP). Confers resistance to bacitracin. The protein is Undecaprenyl-diphosphatase of Thermotoga sp. (strain RQ2).